Here is an 843-residue protein sequence, read N- to C-terminus: Protein P (843 aa).

The interval 1-177 (MPLSYPHFRK…FCGSPYSWEQ (177 aa)) is terminal protein domain (TP). Residues 178-346 (ELQHGSTSLN…YCLSHIINLL (169 aa)) are spacer. Disordered stretches follow at residues 228-259 (KQGQLANGKQGRSGRLRSRVHTPTRWPAGVEP) and 283-314 (EKANPSLSTSKRHTSTGNAVELNPVPPSSVGS). Residues 239–249 (RSGRLRSRVHT) are compositionally biased toward basic residues. Positions 347 to 690 (EDWGPCYEHG…YMNLYPVARQ (344 aa)) are polymerase/reverse transcriptase domain (RT). The region spanning 357-600 (QHYIRTPRTP…YSLHFMGYVI (244 aa)) is the Reverse transcriptase domain. Mg(2+)-binding residues include aspartate 429, aspartate 551, and aspartate 552.

This sequence belongs to the hepadnaviridae P protein family.

It carries out the reaction DNA(n) + a 2'-deoxyribonucleoside 5'-triphosphate = DNA(n+1) + diphosphate. The enzyme catalyses Endonucleolytic cleavage to 5'-phosphomonoester.. Its activity is regulated as follows. Activated by host HSP70 and HSP40 in vitro to be able to bind the epsilon loop of the pgRNA. Because deletion of the RNase H region renders the protein partly chaperone-independent, the chaperones may be needed indirectly to relieve occlusion of the RNA-binding site by this domain. Inhibited by several reverse-transcriptase inhibitors: Lamivudine, Adefovir and Entecavir. In terms of biological role, multifunctional enzyme that converts the viral RNA genome into dsDNA in viral cytoplasmic capsids. This enzyme displays a DNA polymerase activity that can copy either DNA or RNA templates, and a ribonuclease H (RNase H) activity that cleaves the RNA strand of RNA-DNA heteroduplexes in a partially processive 3'- to 5'-endonucleasic mode. Neo-synthesized pregenomic RNA (pgRNA) are encapsidated together with the P protein, and reverse-transcribed inside the nucleocapsid. Initiation of reverse-transcription occurs first by binding the epsilon loop on the pgRNA genome, and is initiated by protein priming, thereby the 5'-end of (-)DNA is covalently linked to P protein. Partial (+)DNA is synthesized from the (-)DNA template and generates the relaxed circular DNA (RC-DNA) genome. After budding and infection, the RC-DNA migrates in the nucleus, and is converted into a plasmid-like covalently closed circular DNA (cccDNA). The activity of P protein does not seem to be necessary for cccDNA generation, and is presumably released from (+)DNA by host nuclear DNA repair machinery. In Homo sapiens (Human), this protein is Protein P.